A 442-amino-acid polypeptide reads, in one-letter code: UDP-N-acetylmuramoylalanine--D-glutamate ligase (442 aa).

ATP is bound at residue 113-119 (GSNGKTT).

The protein belongs to the MurCDEF family.

It localises to the cytoplasm. It catalyses the reaction UDP-N-acetyl-alpha-D-muramoyl-L-alanine + D-glutamate + ATP = UDP-N-acetyl-alpha-D-muramoyl-L-alanyl-D-glutamate + ADP + phosphate + H(+). It functions in the pathway cell wall biogenesis; peptidoglycan biosynthesis. Functionally, cell wall formation. Catalyzes the addition of glutamate to the nucleotide precursor UDP-N-acetylmuramoyl-L-alanine (UMA). This Coxiella burnetii (strain CbuK_Q154) (Coxiella burnetii (strain Q154)) protein is UDP-N-acetylmuramoylalanine--D-glutamate ligase.